A 258-amino-acid chain; its full sequence is Chaperone protein FaeE (258 aa).

The first 34 residues, 1-34, serve as a signal peptide directing secretion; that stretch reads MSKRNAVTTFFTNRVTKALGMTLALMMTCQSAMA. The segment at 239-258 is disordered; that stretch reads KKPAAPEAAKAEKADTAEQK. Residues 247-258 are compositionally biased toward basic and acidic residues; sequence AKAEKADTAEQK.

The protein belongs to the periplasmic pilus chaperone family.

The protein resides in the periplasm. Mediates assembly of pili by forming soluble multimeric complexes with pili subunits as an intermediate step in the assembly process. This protein is involved in K88 pili assembly. Protects pilin protein from proteolytic degradation by DegP and from premature polymerization. In Escherichia coli, this protein is Chaperone protein FaeE (faeE).